The sequence spans 350 residues: DNA-directed RNA polymerase subunit alpha (350 aa).

The segment at 1 to 226 is alpha N-terminal domain (alpha-NTD); sequence MLISQRPTLS…ELFGLARELN (226 aa). An alpha C-terminal domain (alpha-CTD) region spans residues 241 to 350; that stretch reads ADHIASFALP…NQDYAETEQL (110 aa). Residues 326 to 350 are disordered; sequence ATGTWNSDAGYDLEDNQDYAETEQL. A compositionally biased stretch (acidic residues) spans 336–350; the sequence is YDLEDNQDYAETEQL.

It belongs to the RNA polymerase alpha chain family. As to quaternary structure, homodimer. The RNAP catalytic core consists of 2 alpha, 1 beta, 1 beta' and 1 omega subunit. When a sigma factor is associated with the core the holoenzyme is formed, which can initiate transcription.

The enzyme catalyses RNA(n) + a ribonucleoside 5'-triphosphate = RNA(n+1) + diphosphate. In terms of biological role, DNA-dependent RNA polymerase catalyzes the transcription of DNA into RNA using the four ribonucleoside triphosphates as substrates. The protein is DNA-directed RNA polymerase subunit alpha of Mycobacterium sp. (strain JLS).